The chain runs to 449 residues: UDP-N-acetylmuramate--L-alanine ligase (449 aa).

Gly121–Ser127 provides a ligand contact to ATP.

Belongs to the MurCDEF family.

The protein localises to the cytoplasm. The enzyme catalyses UDP-N-acetyl-alpha-D-muramate + L-alanine + ATP = UDP-N-acetyl-alpha-D-muramoyl-L-alanine + ADP + phosphate + H(+). Its pathway is cell wall biogenesis; peptidoglycan biosynthesis. In terms of biological role, cell wall formation. This chain is UDP-N-acetylmuramate--L-alanine ligase, found in Helicobacter pylori (strain ATCC 700392 / 26695) (Campylobacter pylori).